A 1094-amino-acid chain; its full sequence is MATEAAPPRIAVRLPSTSVRDAGANYRIARYVAVVAGLLGAVLAIATPLLPVNQTTAQLNWPQNGTFASVEAPLIGYVATDLNITVPCQAAAGLAGSQNTGKTVLLSTVPKQAPKAVDRGLLLQRANDDLVLVVRNVPLVTAPLSQVLGPTCQRLTFTAHADRVAAEFVGLVQGPNAEHPGAPLRGERSGYDFRPQIVGVFTDLAGPAPPGLSFSASVDTRYSSSPTPLKMAAMILGVALTGAALVALHILDTADGMRHRRFLPARWWSIGGLDTLVIAVLVWWHFVGANTSDDGYILTMARVSEHAGYMANYYRWFGTPEAPFGWYYDLLALWAHVSTASIWMRLPTLAMALTCWWVISREVIPRLGHAVKTSRAAAWTAAGMFLAVWLPLDNGLRPEPIIALGILLTWCSVERAVATSRLLPVAIACIIGALTLFSGPTGIASIGALLVAIGPLRTILHRRSRRFGVLPLVAPILAAATVTAIPIFRDQTFAGEIQANLLKRAVGPSLKWFDEHIRYERLFMASPDGSIARRFAVLALVLALAVSVAMSLRKGRIPGTAAGPSRRIIGITIISFLAMMFTPTKWTHHFGVFAGLAGSLGALAAVAVTGAAMRSRRNRTVFAAVVVFVLALSFASVNGWWYVSNFGVPWSNSFPKWRWSLTTALLELTVLVLLLAAWFHFVANGDGRRTARPTRFRARLAGIVQSPLAIATWLLVLFEVVSLTQAMISQYPAWSVGRSNLQALAGKTCGLAEDVLVELDPNAGMLAPVTAPLADALGAGLSEAFTPNGIPADVTADPVMERPGDRSFLNDDGLITGSEPGTEGGTTAAPGINGSRARLPYNLDPARTPVLGSWRAGVQVPAMLRSGWYRLPTNEQRDRAPLLVVTAAGRFDSREVRLQWATDEQAAAGHHGGSMEFADVGAAPAWRNLRAPLSAIPSTATQVRLVADDQDLAPQHWIALTPPRIPRVRTLQNVVGAADPVFLDWLVGLAFPCQRPFGHQYGVDETPKWRILPDRFGAEANSPVMDHNGGGPLGITELLMRATTVASYLKDDWFRDWGALQRLTPYYPDAQPADLNLGTVTRSGLWSPAPLRRG.

The next 13 membrane-spanning stretches (helical) occupy residues 28-50 (IARY…TPLL), 232-251 (AAMI…LHIL), 264-286 (PARW…WWHF), 341-360 (SIWM…WVIS), 373-392 (TSRA…WLPL), 431-453 (IGAL…LVAI), 466-488 (RFGV…IPIF), 530-552 (SIAR…AMSL), 565-582 (SRRI…MMFT), 586-608 (WTHH…AVAV), 620-642 (TVFA…GWWY), 657-679 (WRWS…AAWF), and 700-722 (LAGI…EVVS). The span at 817–831 (GSEPGTEGGTTAAPG) shows a compositional bias: low complexity. The segment at 817–836 (GSEPGTEGGTTAAPGINGSR) is disordered.

The protein belongs to the emb family.

The protein resides in the cell membrane. Arabinosyl transferase responsible for the polymerization of arabinose into the arabinan of arabinogalactan. In Mycobacterium bovis (strain ATCC BAA-935 / AF2122/97), this protein is Probable arabinosyltransferase C (embC).